Here is a 227-residue protein sequence, read N- to C-terminus: PKHD-type hydroxylase Bamb_4192 (227 aa).

The Fe2OG dioxygenase domain occupies 78 to 178; sequence KVFPPLFNRY…RVASFFWIQS (101 aa). Fe cation contacts are provided by H96, D98, and H159. R169 lines the 2-oxoglutarate pocket.

Fe(2+) is required as a cofactor. The cofactor is L-ascorbate.

In Burkholderia ambifaria (strain ATCC BAA-244 / DSM 16087 / CCUG 44356 / LMG 19182 / AMMD) (Burkholderia cepacia (strain AMMD)), this protein is PKHD-type hydroxylase Bamb_4192.